The sequence spans 692 residues: Elongation factor G (692 aa).

The 276-residue stretch at 8–283 folds into the tr-type G domain; that stretch reads DKYRNIGIMA…AVVDYMPSPL (276 aa). GTP contacts are provided by residues 17 to 24, 81 to 85, and 135 to 138; these read AHIDAGKT, DTPGH, and NKMD.

It belongs to the TRAFAC class translation factor GTPase superfamily. Classic translation factor GTPase family. EF-G/EF-2 subfamily.

It localises to the cytoplasm. Its function is as follows. Catalyzes the GTP-dependent ribosomal translocation step during translation elongation. During this step, the ribosome changes from the pre-translocational (PRE) to the post-translocational (POST) state as the newly formed A-site-bound peptidyl-tRNA and P-site-bound deacylated tRNA move to the P and E sites, respectively. Catalyzes the coordinated movement of the two tRNA molecules, the mRNA and conformational changes in the ribosome. This chain is Elongation factor G, found in Trichlorobacter lovleyi (strain ATCC BAA-1151 / DSM 17278 / SZ) (Geobacter lovleyi).